Reading from the N-terminus, the 484-residue chain is UDP-N-acetylmuramoyl-L-alanyl-D-glutamate--L-lysine ligase (484 aa).

Ser-43 serves as a coordination point for UDP-N-acetyl-alpha-D-muramoyl-L-alanyl-D-glutamate. 119-125 (GTKGKTT) is a binding site for ATP. UDP-N-acetyl-alpha-D-muramoyl-L-alanyl-D-glutamate is bound by residues 161-162 (TT), Ser-188, and Arg-196. Lys-230 is subject to N6-carboxylysine. Positions 405–408 (DDPN) match the L-lysine recognition motif motif.

It belongs to the MurCDEF family. MurE subfamily. Carboxylation is probably crucial for Mg(2+) binding and, consequently, for the gamma-phosphate positioning of ATP.

It localises to the cytoplasm. It carries out the reaction UDP-N-acetyl-alpha-D-muramoyl-L-alanyl-D-glutamate + L-lysine + ATP = UDP-N-acetyl-alpha-D-muramoyl-L-alanyl-gamma-D-glutamyl-L-lysine + ADP + phosphate + H(+). The protein operates within cell wall biogenesis; peptidoglycan biosynthesis. Functionally, catalyzes the addition of L-lysine to the nucleotide precursor UDP-N-acetylmuramoyl-L-alanyl-D-glutamate (UMAG) in the biosynthesis of bacterial cell-wall peptidoglycan. This chain is UDP-N-acetylmuramoyl-L-alanyl-D-glutamate--L-lysine ligase, found in Streptococcus agalactiae serotype III (strain NEM316).